Reading from the N-terminus, the 72-residue chain is SRY-related protein MG44 (72 aa).

The HMG box DNA-binding region spans 1–69 (VKRPMNAFMV…KHMADYPNYK (69 aa)).

Its subcellular location is the nucleus. This is SRY-related protein MG44 from Tarentola mauritanica (Common wall gecko).